We begin with the raw amino-acid sequence, 120 residues long: Large ribosomal subunit protein uL18 (120 aa).

The protein belongs to the universal ribosomal protein uL18 family. In terms of assembly, part of the 50S ribosomal subunit; part of the 5S rRNA/L5/L18/L25 subcomplex. Contacts the 5S and 23S rRNAs.

This is one of the proteins that bind and probably mediate the attachment of the 5S RNA into the large ribosomal subunit, where it forms part of the central protuberance. The protein is Large ribosomal subunit protein uL18 of Bartonella henselae (strain ATCC 49882 / DSM 28221 / CCUG 30454 / Houston 1) (Rochalimaea henselae).